Here is a 670-residue protein sequence, read N- to C-terminus: UvrABC system protein B (670 aa).

Residues 26–183 enclose the Helicase ATP-binding domain; it reads EGLEDGLAHQ…RRLAELQYSR (158 aa). 39–46 is a binding site for ATP; it reads GVTGSGKT. Residues 92–115 carry the Beta-hairpin motif; the sequence is YYDYYQPEAYVPSSDTFIEKDASV. The region spanning 431–597 is the Helicase C-terminal domain; sequence QVDDLLSEIR…GLNKKISDIL (167 aa). Residues 630–665 enclose the UVR domain; sequence ELKIRELESKMLTHAQNLEFEEAAALRDELQALRAQ.

This sequence belongs to the UvrB family. Forms a heterotetramer with UvrA during the search for lesions. Interacts with UvrC in an incision complex.

Its subcellular location is the cytoplasm. In terms of biological role, the UvrABC repair system catalyzes the recognition and processing of DNA lesions. A damage recognition complex composed of 2 UvrA and 2 UvrB subunits scans DNA for abnormalities. Upon binding of the UvrA(2)B(2) complex to a putative damaged site, the DNA wraps around one UvrB monomer. DNA wrap is dependent on ATP binding by UvrB and probably causes local melting of the DNA helix, facilitating insertion of UvrB beta-hairpin between the DNA strands. Then UvrB probes one DNA strand for the presence of a lesion. If a lesion is found the UvrA subunits dissociate and the UvrB-DNA preincision complex is formed. This complex is subsequently bound by UvrC and the second UvrB is released. If no lesion is found, the DNA wraps around the other UvrB subunit that will check the other stand for damage. The chain is UvrABC system protein B from Pectobacterium carotovorum subsp. carotovorum (strain PC1).